A 537-amino-acid polypeptide reads, in one-letter code: Putative cysteine ligase BshC (537 aa).

The protein belongs to the BshC family.

In terms of biological role, involved in bacillithiol (BSH) biosynthesis. May catalyze the last step of the pathway, the addition of cysteine to glucosamine malate (GlcN-Mal) to generate BSH. The polypeptide is Putative cysteine ligase BshC (Staphylococcus saprophyticus subsp. saprophyticus (strain ATCC 15305 / DSM 20229 / NCIMB 8711 / NCTC 7292 / S-41)).